The sequence spans 473 residues: Trigger factor (473 aa).

In terms of domain architecture, PPIase FKBP-type spans 174 to 261; it reads GDIAVVSFKG…LKDLKEKELP (88 aa). The tract at residues 442-473 is disordered; the sequence is ATKLTTKTTTKATTKKGVKTKSKPKVNKKEKN. Positions 444-453 are enriched in low complexity; the sequence is KLTTKTTTKA. A compositionally biased stretch (basic residues) spans 454–467; sequence TTKKGVKTKSKPKV.

The protein belongs to the FKBP-type PPIase family. Tig subfamily.

Its subcellular location is the cytoplasm. The enzyme catalyses [protein]-peptidylproline (omega=180) = [protein]-peptidylproline (omega=0). In terms of biological role, involved in protein export. Acts as a chaperone by maintaining the newly synthesized protein in an open conformation. Functions as a peptidyl-prolyl cis-trans isomerase. This Prochlorococcus marinus subsp. pastoris (strain CCMP1986 / NIES-2087 / MED4) protein is Trigger factor.